Here is an 866-residue protein sequence, read N- to C-terminus: Probable beta-glucosidase F (866 aa).

An N-terminal signal peptide occupies residues 1–20 (MAAFPAYLALLSYLVPGALS). Residues asparagine 65, asparagine 73, and asparagine 257 are each glycosylated (N-linked (GlcNAc...) asparagine). Aspartate 285 is an active-site residue. N-linked (GlcNAc...) asparagine glycosylation is found at asparagine 328, asparagine 360, asparagine 395, asparagine 421, asparagine 474, asparagine 659, asparagine 664, and asparagine 724. A disordered region spans residues 725–748 (SSKTYPYPDGYTTEPKPAPRAGGA).

Belongs to the glycosyl hydrolase 3 family.

The protein localises to the secreted. It catalyses the reaction Hydrolysis of terminal, non-reducing beta-D-glucosyl residues with release of beta-D-glucose.. It functions in the pathway glycan metabolism; cellulose degradation. Beta-glucosidases are one of a number of cellulolytic enzymes involved in the degradation of cellulosic biomass. Catalyzes the last step releasing glucose from the inhibitory cellobiose. This chain is Probable beta-glucosidase F (bglF), found in Aspergillus flavus (strain ATCC 200026 / FGSC A1120 / IAM 13836 / NRRL 3357 / JCM 12722 / SRRC 167).